The chain runs to 881 residues: Formin-like protein 10 (881 aa).

The signal sequence occupies residues 1–24; sequence MAMKRVVFLLLLVAASALVKSSRG. Positions 194–223 are disordered; that stretch reads LTPSNSLNMEPPSPYYPSKSAHKHQGVAPP. Residues 236-256 form a helical membrane-spanning segment; the sequence is VVLIAVLPTAALSFLAAFLCF. Polar residues predominate over residues 333-346; that stretch reads TLVTGGTQENNATS. 3 disordered regions span residues 333 to 427, 683 to 703, and 837 to 881; these read TLVT…EVNA, ENGRSPPFPSTSDDNSNESLQ, and ASQK…DSND. Residues 351-390 show a composition bias toward pro residues; the sequence is LMPPPPPPPPPPPPPPPPPPPRPPPPPPPIKKGAPPPAPP. Residues 400–424 show a composition bias toward low complexity; sequence LSPTESSRSEESSASELASESSETE. The FH2 domain maps to 422–854; it reads ETEVNAPRAK…KSQANGNSNN (433 aa). Positions 692 to 701 are enriched in polar residues; the sequence is STSDDNSNES. Residues 846–865 are compositionally biased toward low complexity; sequence SQANGNSNNPSSQSNPQEQQ. The span at 870–881 shows a compositional bias: basic and acidic residues; sequence LDHHFDSSDSND.

This sequence belongs to the formin-like family. Class-I subfamily.

It is found in the membrane. The chain is Formin-like protein 10 (FH10) from Oryza sativa subsp. japonica (Rice).